We begin with the raw amino-acid sequence, 127 residues long: Glycine cleavage system H protein (127 aa).

One can recognise a Lipoyl-binding domain in the interval 22–104; the sequence is EVVIGITHFA…YEGAWMVKVE (83 aa). Lys-63 carries the N6-lipoyllysine modification.

This sequence belongs to the GcvH family. As to quaternary structure, the glycine cleavage system is composed of four proteins: P, T, L and H. Requires (R)-lipoate as cofactor.

Its function is as follows. The glycine cleavage system catalyzes the degradation of glycine. The H protein shuttles the methylamine group of glycine from the P protein to the T protein. Is also involved in protein lipoylation via its role as an octanoyl/lipoyl carrier protein intermediate. The protein is Glycine cleavage system H protein of Bacillus cereus (strain G9842).